The following is a 192-amino-acid chain: Leucine-rich repeat-containing protein 51 (192 aa).

LRR repeat units lie at residues 49–71, 80–101, and 103–124; these read SLTQ…NQVA, NLAW…LTTF, and NLSV…NKLA. The 39-residue stretch at 137–175 folds into the LRRCT domain; sequence NPMEEEKGYRQYVLCTLPHITTFDFSGVTKADRTTAEVW.

It is found in the cytoplasm. The sequence is that of Leucine-rich repeat-containing protein 51 from Macaca mulatta (Rhesus macaque).